Consider the following 806-residue polypeptide: Sucrose synthase (806 aa).

Residues 275 to 752 (MVFNVVILSP…GLQRIEEKYT (478 aa)) form a GT-B glycosyltransferase region.

It belongs to the glycosyltransferase 1 family. Plant sucrose synthase subfamily.

It carries out the reaction an NDP-alpha-D-glucose + D-fructose = a ribonucleoside 5'-diphosphate + sucrose + H(+). Its function is as follows. Sucrose-cleaving enzyme that provides UDP-glucose and fructose for various metabolic pathways. This chain is Sucrose synthase (SUCS), found in Vicia faba (Broad bean).